The primary structure comprises 367 residues: NADH-quinone oxidoreductase subunit H (367 aa).

8 consecutive transmembrane segments (helical) span residues 19 to 39 (ALFI…AYLV), 87 to 107 (ICFL…WAVI), 132 to 152 (IGVL…IIAG), 178 to 198 (IGLT…GEIV), 204 to 224 (MPYW…ISAL), 266 to 286 (ILIN…PLNI), 291 to 311 (IIPG…CFIW), and 328 to 348 (GWKV…SILV).

It belongs to the complex I subunit 1 family. NDH-1 is composed of 14 different subunits. Subunits NuoA, H, J, K, L, M, N constitute the membrane sector of the complex.

Its subcellular location is the cell inner membrane. The enzyme catalyses a quinone + NADH + 5 H(+)(in) = a quinol + NAD(+) + 4 H(+)(out). In terms of biological role, NDH-1 shuttles electrons from NADH, via FMN and iron-sulfur (Fe-S) centers, to quinones in the respiratory chain. The immediate electron acceptor for the enzyme in this species is believed to be ubiquinone. Couples the redox reaction to proton translocation (for every two electrons transferred, four hydrogen ions are translocated across the cytoplasmic membrane), and thus conserves the redox energy in a proton gradient. This subunit may bind ubiquinone. The chain is NADH-quinone oxidoreductase subunit H from Ehrlichia chaffeensis (strain ATCC CRL-10679 / Arkansas).